Reading from the N-terminus, the 256-residue chain is Hydroxyacylglutathione hydrolase (256 aa).

Residues His-57, His-59, Asp-61, His-62, His-115, Asp-134, and His-172 each contribute to the Zn(2+) site.

Belongs to the metallo-beta-lactamase superfamily. Glyoxalase II family. In terms of assembly, monomer. Requires Zn(2+) as cofactor.

It carries out the reaction an S-(2-hydroxyacyl)glutathione + H2O = a 2-hydroxy carboxylate + glutathione + H(+). Its pathway is secondary metabolite metabolism; methylglyoxal degradation; (R)-lactate from methylglyoxal: step 2/2. Thiolesterase that catalyzes the hydrolysis of S-D-lactoyl-glutathione to form glutathione and D-lactic acid. The chain is Hydroxyacylglutathione hydrolase from Maricaulis maris (strain MCS10) (Caulobacter maris).